The sequence spans 76 residues: Large ribosomal subunit protein bL31 (76 aa).

Positions 16, 18, 38, and 41 each coordinate Zn(2+).

The protein belongs to the bacterial ribosomal protein bL31 family. Type A subfamily. As to quaternary structure, part of the 50S ribosomal subunit. Requires Zn(2+) as cofactor.

Functionally, binds the 23S rRNA. The polypeptide is Large ribosomal subunit protein bL31 (Nocardia farcinica (strain IFM 10152)).